The chain runs to 149 residues: Endonuclease I (149 aa).

As to quaternary structure, homodimer.

The catalysed reaction is Endonucleolytic cleavage to 5'-phosphooligonucleotide end-products.. In terms of biological role, junction-resolving enzyme that selectively binds and cleaves four-way (Holliday) DNA junctions present after viral genomic replication. These intermediates are created during DNA repair, processing of stalled replication forks and homologous genetic recombination. Introduces two nicks on the two non-crossing strands, at 5' sides of the junction. Also participates together with gp6 in the degradation of host chromosome to provide nucleotides for phage DNA synthesis. The protein is Endonuclease I of Escherichia coli (Bacteriophage T7).